Here is a 628-residue protein sequence, read N- to C-terminus: Carbon monoxide dehydrogenase 1 (628 aa).

[4Fe-4S] cluster is bound by residues C44, C52, C53, C56, C61, and C75. The [Ni-4Fe-5S] cluster site is built by H266, C302, C340, C448, C478, and C519.

Belongs to the Ni-containing carbon monoxide dehydrogenase family. Homodimer. It depends on [4Fe-4S] cluster as a cofactor. Requires [Ni-4Fe-5S] cluster as cofactor.

It catalyses the reaction CO + 2 oxidized [2Fe-2S]-[ferredoxin] + H2O = 2 reduced [2Fe-2S]-[ferredoxin] + CO2 + 2 H(+). Its function is as follows. CODH oxidizes carbon monoxide coupled, via CooF, to the reduction of a hydrogen cation by a hydrogenase (possibly CooH). This chain is Carbon monoxide dehydrogenase 1 (cooS1), found in Methanosarcina mazei (strain ATCC BAA-159 / DSM 3647 / Goe1 / Go1 / JCM 11833 / OCM 88) (Methanosarcina frisia).